Consider the following 38-residue polypeptide: Photosystem II reaction center protein L (38 aa).

A helical membrane pass occupies residues 17 to 37 (SLFWGLLLIFVLAVLFSSYFF).

It belongs to the PsbL family. PSII is composed of 1 copy each of membrane proteins PsbA, PsbB, PsbC, PsbD, PsbE, PsbF, PsbH, PsbI, PsbJ, PsbK, PsbL, PsbM, PsbT, PsbX, PsbY, PsbZ, Psb30/Ycf12, at least 3 peripheral proteins of the oxygen-evolving complex and a large number of cofactors. It forms dimeric complexes.

Its subcellular location is the plastid. The protein localises to the chloroplast thylakoid membrane. One of the components of the core complex of photosystem II (PSII). PSII is a light-driven water:plastoquinone oxidoreductase that uses light energy to abstract electrons from H(2)O, generating O(2) and a proton gradient subsequently used for ATP formation. It consists of a core antenna complex that captures photons, and an electron transfer chain that converts photonic excitation into a charge separation. This subunit is found at the monomer-monomer interface and is required for correct PSII assembly and/or dimerization. The sequence is that of Photosystem II reaction center protein L from Rhodomonas salina (Cryptomonas salina).